The following is a 470-amino-acid chain: Meiosis-specific with OB domain-containing protein (470 aa).

A DNA-binding region (OB) is located at residues 167 to 272 (IINVLAAVRS…EANILLNFIR (106 aa)).

This sequence belongs to the MEIOB family. As to quaternary structure, component of a multiprotein complex with RPA2 and SPATA22. Interacts with SPATA22. Interacts with the complex BRME1:HSF2BP:BRCA2.

It is found in the cytoplasm. Its subcellular location is the nucleus. It localises to the chromosome. Functionally, single-stranded DNA-binding protein required for homologous recombination in meiosis I. Required for double strand breaks (DSBs) repair and crossover formation and promotion of faithful and complete synapsis. Not required for the initial loading of recombinases but required to maintain a proper number of RAD51 and DMC1 foci after the zygotene stage. May act by ensuring the stabilization of recombinases, which is required for successful homology search and meiotic recombination. Displays Single-stranded DNA 3'-5' exonuclease activity in vitro. This chain is Meiosis-specific with OB domain-containing protein, found in Rattus norvegicus (Rat).